Consider the following 700-residue polypeptide: Putative ankyrin repeat protein FPV018 (700 aa).

ANK repeat units lie at residues 29–59, 63–92, 126–155, 204–233, 236–265, 270–299, 301–332, 395–424, 428–457, 461–490, and 494–523; these read DRLL…VINM, NRLL…VING, RIRR…DLKM, MRRI…LADT, ALED…DINS, NSHT…DPDI, DIYS…RIRC, CNMY…DVNV, YGKT…NVNE, YGIT…DVNQ, and DKNT…DMCF.

This chain is Putative ankyrin repeat protein FPV018, found in Fowlpox virus (strain NVSL) (FPV).